A 300-amino-acid chain; its full sequence is Protein N-terminal and lysine N-methyltransferase EFM7 (300 aa).

S-adenosyl-L-methionine is bound by residues W75, 101–103 (GAG), D123, W156, and S179.

Belongs to the class I-like SAM-binding methyltransferase superfamily. EFM7 family.

It localises to the cytoplasm. S-adenosyl-L-methionine-dependent protein methyltransferase that trimethylates the N-terminal glycine 'Gly-2' of elongation factor 1-alpha, before also catalyzing the mono- and dimethylation of 'Lys-3'. This is Protein N-terminal and lysine N-methyltransferase EFM7 from Cryptococcus neoformans var. neoformans serotype D (strain JEC21 / ATCC MYA-565) (Filobasidiella neoformans).